The sequence spans 245 residues: Carboxy-S-adenosyl-L-methionine synthase (245 aa).

Residues Y39, 64-66, 117-118, and R199 contribute to the S-adenosyl-L-methionine site; these read GSS and DI.

The protein belongs to the class I-like SAM-binding methyltransferase superfamily. Cx-SAM synthase family. In terms of assembly, homodimer.

The catalysed reaction is prephenate + S-adenosyl-L-methionine = carboxy-S-adenosyl-L-methionine + 3-phenylpyruvate + H2O. Catalyzes the conversion of S-adenosyl-L-methionine (SAM) to carboxy-S-adenosyl-L-methionine (Cx-SAM). This chain is Carboxy-S-adenosyl-L-methionine synthase, found in Desulfotalea psychrophila (strain LSv54 / DSM 12343).